A 266-amino-acid chain; its full sequence is Small ribosomal subunit protein uS2 (266 aa).

Positions 233 to 266 (AVREEEFASAPDAGKKGRQAQPKKGKRASDAAAE) are disordered. Positions 248–258 (KGRQAQPKKGK) are enriched in basic residues.

It belongs to the universal ribosomal protein uS2 family.

The sequence is that of Small ribosomal subunit protein uS2 from Xylella fastidiosa (strain M23).